A 1500-amino-acid chain; its full sequence is Carbamoyl-phosphate synthase [ammonia], mitochondrial (1500 aa).

Residues 1–38 constitute a mitochondrion transit peptide; the sequence is MTRILTACKVVKTLKSGFGLANVTSKRQWDFSRPGIRL. The anthranilate phosphoribosyltransferase homolog stretch occupies residues 39–218; it reads LSVKAQTAHI…VKVFGKGNPT (180 aa). N6-acetyllysine; alternate is present on residues K55, K57, and K119. K55 bears the N6-glutaryllysine; alternate mark. An N6-succinyllysine; alternate mark is found at K55, K57, and K119. Position 148 is a phosphoserine (S148). 2 positions are modified to N6-acetyllysine; alternate: K157 and K171. K157 carries the N6-succinyllysine; alternate modification. K171 carries the post-translational modification N6-glutaryllysine; alternate. K176 carries the N6-glutaryllysine modification. K182 is modified (N6-acetyllysine). Phosphoserine is present on S189. Position 197 is an N6-acetyllysine (K197). 5 positions are modified to N6-acetyllysine; alternate: K207, K210, K214, K219, and K228. An N6-glutaryllysine; alternate mark is found at K207, K210, K214, K219, and K228. K207 is subject to N6-succinyllysine; alternate. The residue at position 214 (K214) is an N6-succinyllysine; alternate. Residues 219–404 form the Glutamine amidotransferase type-1 domain; it reads KVVAVDCGIK…FSLIKKGKGT (186 aa). An N6-glutaryllysine modification is found at K237. K279 is modified (N6-acetyllysine). N6-acetyllysine; alternate is present on residues K280, K287, K307, and K310. Residue K280 is modified to N6-glutaryllysine; alternate. An N6-succinyllysine; alternate mark is found at K287 and K307. Residues K307 and K310 each carry the N6-glutaryllysine; alternate modification. At K400 the chain carries N6-succinyllysine. N6-glutaryllysine; alternate is present on residues K402, K412, K453, and K458. 2 positions are modified to N6-succinyllysine; alternate: K402 and K412. 6 positions are modified to N6-acetyllysine; alternate: K412, K453, K458, K522, K527, and K532. An N6-succinyllysine; alternate mark is found at K458, K522, and K527. 2 positions are modified to N6-glutaryllysine; alternate: K527 and K532. Phosphoserine; alternate is present on S537. A glycan (O-linked (GlcNAc) serine; alternate) is linked at S537. S540 carries the phosphoserine modification. Positions 551–743 constitute an ATP-grasp 1 domain; that stretch reads SDKLNEINEK…LAFIAAKIAL (193 aa). N6-acetyllysine; alternate is present on residues K553 and K560. K553 carries the N6-glutaryllysine; alternate modification. K553 and K560 each carry N6-succinyllysine; alternate. S569 carries the post-translational modification Phosphoserine. K575, K603, and K612 each carry N6-acetyllysine; alternate. An N6-succinyllysine; alternate mark is found at K575, K603, and K612. Position 630 is an N6-acetyllysine (K630). K728 carries the post-translational modification N6-glutaryllysine. Residues K751, K757, K772, K793, K811, K831, K841, and K856 each carry the N6-acetyllysine; alternate modification. An N6-succinyllysine; alternate mark is found at K751 and K757. Residues K757, K772, K793, and K811 each carry the N6-glutaryllysine; alternate modification. K793 carries the N6-succinyllysine; alternate modification. K831 bears the N6-succinyllysine; alternate mark. K841 and K856 each carry N6-glutaryllysine; alternate. Residue K869 is modified to N6-glutaryllysine. K875, K889, and K892 each carry N6-acetyllysine; alternate. Residues K875, K889, and K892 each carry the N6-glutaryllysine; alternate modification. 3 positions are modified to N6-succinyllysine; alternate: K875, K889, and K892. Phosphoserine is present on residues S896 and S898. N6-acetyllysine; alternate is present on residues K908, K915, and K919. 3 positions are modified to N6-glutaryllysine; alternate: K908, K915, and K919. 2 positions are modified to N6-succinyllysine; alternate: K915 and K919. K935 bears the N6-acetyllysine mark. Position 1036 is a phosphoserine (S1036). N6-acetyllysine; alternate is present on K1074. K1074 carries the post-translational modification N6-glutaryllysine; alternate. Residue K1074 is modified to N6-succinyllysine; alternate. Residues S1079, S1090, and S1093 each carry the phosphoserine modification. Positions 1093–1284 constitute an ATP-grasp 2 domain; that stretch reads SAVLDELKVA…FIDVATKVMI (192 aa). K1100 carries the post-translational modification N6-acetyllysine; alternate. Residue K1100 is modified to N6-succinyllysine; alternate. At K1149 the chain carries N6-succinyllysine. N6-acetyllysine; alternate occurs at positions 1168 and 1183. N6-glutaryllysine; alternate occurs at positions 1168 and 1183. K1168 and K1183 each carry N6-succinyllysine; alternate. S1203 carries the phosphoserine modification. K1222 is modified (N6-acetyllysine). An N6-glutaryllysine modification is found at K1224. K1232, K1269, and K1291 each carry N6-acetyllysine; alternate. An N6-succinyllysine; alternate mark is found at K1232, K1269, and K1291. O-linked (GlcNAc) serine glycosylation occurs at S1331. T1332 carries O-linked (GlcNAc) threonine glycosylation. The region spanning 1355–1500 is the MGS-like domain; it reads FKIPQKGILI…YRQYSAGKAA (146 aa). At K1356 the chain carries N6-acetyllysine; alternate. 2 positions are modified to N6-glutaryllysine; alternate: K1356 and K1360. An N6-succinyllysine; alternate mark is found at K1356 and K1360. Residues T1391, T1394, and W1410 each coordinate N-acetyl-L-glutamate. Phosphoserine is present on residues S1419 and S1431. Positions 1437 and 1440 each coordinate N-acetyl-L-glutamate. K1444 bears the N6-acetyllysine; alternate mark. N6-succinyllysine; alternate is present on K1444. N1449 contacts N-acetyl-L-glutamate. Residues K1471, K1479, and K1486 each carry the N6-acetyllysine; alternate modification. N6-succinyllysine; alternate is present on residues K1471, K1479, and K1486. K1479 and K1486 each carry N6-glutaryllysine; alternate.

Can form homooligomers (monomers as predominant form and dimers). In terms of processing, 50% of the mature protein that was isolated had Leu-39 as its N-terminal residue and 50% had Ser-40 suggesting two adjacent processing sites. However, the possibility of proteolytic removal of Leu-39 during the isolation of the enzyme cannot be excluded. Undergoes proteolytic cleavage in the C-terminal region corresponding to the loss of approximately 12 AA residues from the C-terminus. Succinylated at Lys-287 and Lys-1291. Desuccinylated at Lys-1291 by SIRT5, leading to activation. Post-translationally, glutarylated. Glutarylation levels increase during fasting. Deglutarylated by SIRT5 at Lys-55, Lys-219, Lys-412, Lys-889, Lys-892, Lys-915, Lys-1360 and Lys-1486, leading to activation. Primarily in the liver and small intestine.

Its subcellular location is the mitochondrion. The protein resides in the nucleus. It localises to the nucleolus. The protein localises to the cell membrane. The enzyme catalyses hydrogencarbonate + NH4(+) + 2 ATP = carbamoyl phosphate + 2 ADP + phosphate + 2 H(+). Requires N-acetyl-L-glutamate (NAG) as an allosteric activator. N-acetyl-L-beta-phenylglutamate (Phe-NAG) can also activate CPSase I, but with an activation constant that is 2-fold higher than that for NAG. Its function is as follows. Involved in the urea cycle of ureotelic animals where the enzyme plays an important role in removing excess ammonia from the cell. In Rattus norvegicus (Rat), this protein is Carbamoyl-phosphate synthase [ammonia], mitochondrial (Cps1).